Here is a 303-residue protein sequence, read N- to C-terminus: tRNA dimethylallyltransferase 1 (303 aa).

Position 17-24 (17-24 (GPTACGKT)) interacts with ATP. 19–24 (TACGKT) provides a ligand contact to substrate. The interaction with substrate tRNA stretch occupies residues 42 to 45 (DSRQ).

It belongs to the IPP transferase family. Monomer. Mg(2+) is required as a cofactor.

It carries out the reaction adenosine(37) in tRNA + dimethylallyl diphosphate = N(6)-dimethylallyladenosine(37) in tRNA + diphosphate. Catalyzes the transfer of a dimethylallyl group onto the adenine at position 37 in tRNAs that read codons beginning with uridine, leading to the formation of N6-(dimethylallyl)adenosine (i(6)A). This chain is tRNA dimethylallyltransferase 1, found in Hahella chejuensis (strain KCTC 2396).